The sequence spans 566 residues: Proline--tRNA ligase 1 (566 aa).

It belongs to the class-II aminoacyl-tRNA synthetase family. ProS type 1 subfamily. Homodimer.

Its subcellular location is the cytoplasm. The catalysed reaction is tRNA(Pro) + L-proline + ATP = L-prolyl-tRNA(Pro) + AMP + diphosphate. Functionally, catalyzes the attachment of proline to tRNA(Pro) in a two-step reaction: proline is first activated by ATP to form Pro-AMP and then transferred to the acceptor end of tRNA(Pro). As ProRS can inadvertently accommodate and process non-cognate amino acids such as alanine and cysteine, to avoid such errors it has two additional distinct editing activities against alanine. One activity is designated as 'pretransfer' editing and involves the tRNA(Pro)-independent hydrolysis of activated Ala-AMP. The other activity is designated 'posttransfer' editing and involves deacylation of mischarged Ala-tRNA(Pro). The misacylated Cys-tRNA(Pro) is not edited by ProRS. The protein is Proline--tRNA ligase 1 of Bacillus cereus (strain ATCC 14579 / DSM 31 / CCUG 7414 / JCM 2152 / NBRC 15305 / NCIMB 9373 / NCTC 2599 / NRRL B-3711).